The sequence spans 299 residues: Serine/threonine-protein kinase 1 (299 aa).

Residues I39–F277 enclose the Protein kinase domain. ATP-binding positions include F45 to V53 and K66. D153 serves as the catalytic Proton acceptor.

It belongs to the protein kinase superfamily. Ser/Thr protein kinase family.

It localises to the virion. Its subcellular location is the host cytoplasm. The enzyme catalyses L-seryl-[protein] + ATP = O-phospho-L-seryl-[protein] + ADP + H(+). It catalyses the reaction L-threonyl-[protein] + ATP = O-phospho-L-threonyl-[protein] + ADP + H(+). Its function is as follows. Essential for viral replication. It may mediate the virus progression through DNA replication. The protein is Serine/threonine-protein kinase 1 of African swine fever virus (isolate Tick/Malawi/Lil 20-1/1983) (ASFV).